We begin with the raw amino-acid sequence, 310 residues long: MNKDNILHTDTNIKITLFSEVSIGISANSALFFSHLFMLFEKNRSKPIDLYIAFLSLTQLMLLITIGLIAADMFMSRGRWDSTTCQSLIYLHRLLRGFTLCATCLLNVLWTITLSPRSSCLTTFKHKSPHHISGAFLFFCVLYISFGSHLFLSTIATPNLTSDNFMYVTQSCSFLPMSYSRTSMFSTPMAIREALLIGLIGLSSGYMVAFLWRHKNQARHLHSTSLSSKVSPEQRATRTIMILMSFFVVLYILENVVFYSRMTFKDGSMFYCVQIIVSHSYATISPFVFICTEKRIIKLWGSMSSRIVSI.

Over methionine 1–serine 19 the chain is Extracellular. The chain crosses the membrane as a helical span at residues glutamate 20–phenylalanine 40. At glutamate 41–aspartate 49 the chain is on the cytoplasmic side. A helical transmembrane segment spans residues leucine 50 to alanine 70. Residues alanine 71–arginine 93 lie on the Extracellular side of the membrane. A disulfide bridge links cysteine 85 with cysteine 172. The chain crosses the membrane as a helical span at residues leucine 94 to leucine 114. At serine 115 to histidine 131 the chain is on the cytoplasmic side. Residues isoleucine 132 to leucine 152 form a helical membrane-spanning segment. Topologically, residues serine 153 to alanine 190 are extracellular. Residue asparagine 159 is glycosylated (N-linked (GlcNAc...) asparagine). The helical transmembrane segment at isoleucine 191–leucine 211 threads the bilayer. Topologically, residues tryptophan 212–arginine 238 are cytoplasmic. Residues threonine 239–tyrosine 259 form a helical membrane-spanning segment. The Extracellular portion of the chain corresponds to serine 260–methionine 269. A helical membrane pass occupies residues phenylalanine 270–isoleucine 290. Residues cysteine 291–isoleucine 310 are Cytoplasmic-facing.

This sequence belongs to the G-protein coupled receptor 1 family. As to expression, expressed in 1-4% of neurons of the vomeronasal organ. Only one pheromone receptor gene may be expressed in a particular neuron. Not expressed in the main olfactory epithelium.

It is found in the cell membrane. Functionally, putative pheromone receptor implicated in the regulation of social as well as reproductive behavior. The chain is Vomeronasal type-1 receptor 97 (Vom1r97) from Rattus norvegicus (Rat).